A 305-amino-acid polypeptide reads, in one-letter code: Coenzyme PQQ synthesis protein B (305 aa).

This sequence belongs to the PqqB family.

The protein operates within cofactor biosynthesis; pyrroloquinoline quinone biosynthesis. Functionally, may be involved in the transport of PQQ or its precursor to the periplasm. The sequence is that of Coenzyme PQQ synthesis protein B from Cupriavidus necator (strain ATCC 17699 / DSM 428 / KCTC 22496 / NCIMB 10442 / H16 / Stanier 337) (Ralstonia eutropha).